Reading from the N-terminus, the 357-residue chain is UDP-N-acetylglucosamine--N-acetylmuramyl-(pentapeptide) pyrophosphoryl-undecaprenol N-acetylglucosamine transferase (357 aa).

UDP-N-acetyl-alpha-D-glucosamine is bound by residues 14-16 (SGG), asparagine 125, serine 190, and glutamine 290.

Belongs to the glycosyltransferase 28 family. MurG subfamily.

It is found in the cell inner membrane. The catalysed reaction is di-trans,octa-cis-undecaprenyl diphospho-N-acetyl-alpha-D-muramoyl-L-alanyl-D-glutamyl-meso-2,6-diaminopimeloyl-D-alanyl-D-alanine + UDP-N-acetyl-alpha-D-glucosamine = di-trans,octa-cis-undecaprenyl diphospho-[N-acetyl-alpha-D-glucosaminyl-(1-&gt;4)]-N-acetyl-alpha-D-muramoyl-L-alanyl-D-glutamyl-meso-2,6-diaminopimeloyl-D-alanyl-D-alanine + UDP + H(+). Its pathway is cell wall biogenesis; peptidoglycan biosynthesis. Functionally, cell wall formation. Catalyzes the transfer of a GlcNAc subunit on undecaprenyl-pyrophosphoryl-MurNAc-pentapeptide (lipid intermediate I) to form undecaprenyl-pyrophosphoryl-MurNAc-(pentapeptide)GlcNAc (lipid intermediate II). This is UDP-N-acetylglucosamine--N-acetylmuramyl-(pentapeptide) pyrophosphoryl-undecaprenol N-acetylglucosamine transferase from Chlamydia felis (strain Fe/C-56) (Chlamydophila felis).